Here is a 505-residue protein sequence, read N- to C-terminus: 2,3-bisphosphoglycerate-independent phosphoglycerate mutase (505 aa).

The Mn(2+) site is built by D12 and S62. S62 acts as the Phosphoserine intermediate in catalysis. Substrate-binding positions include H123, 153 to 154 (RD), R185, R191, 257 to 260 (RPDR), and K330. Residues D397, H401, D438, H439, and H456 each contribute to the Mn(2+) site.

The protein belongs to the BPG-independent phosphoglycerate mutase family. Monomer. Mn(2+) is required as a cofactor.

It catalyses the reaction (2R)-2-phosphoglycerate = (2R)-3-phosphoglycerate. Its pathway is carbohydrate degradation; glycolysis; pyruvate from D-glyceraldehyde 3-phosphate: step 3/5. Its function is as follows. Catalyzes the interconversion of 2-phosphoglycerate and 3-phosphoglycerate. This chain is 2,3-bisphosphoglycerate-independent phosphoglycerate mutase, found in Staphylococcus aureus (strain COL).